The sequence spans 343 residues: Cyclic AMP-AMP-AMP synthase (343 aa).

The protein belongs to the CD-NTase family. D01 subfamily. The cofactor is Mg(2+).

It catalyses the reaction 3 ATP = 2',3',3'-c-tri-AMP + 3 diphosphate. Its function is as follows. Cyclic nucleotide synthase (second messenger synthase) of a CBASS antivirus system. CBASS (cyclic oligonucleotide-based antiphage signaling system) provides immunity against bacteriophage. The CD-NTase protein synthesizes cyclic nucleotides in response to infection; these serve as specific second messenger signals. The signals activate a diverse range of effectors, leading to bacterial cell death and thus abortive phage infection. A type II-C(AAAA) CBASS system. Cyclic trinucleotide synthase that catalyzes the synthesis of 2',3',3'-cyclic AMP-AMP-AMP (2',3',3'-c-tri-AMP or 2'3'3'-cAAA) as the major product, as well as another cyclic AMP(4) 2'-5'-linked minor product that acts as a second messenger for cell signal transduction. This chain is Cyclic AMP-AMP-AMP synthase, found in Acinetobacter sp. (strain ATCC 27244 / 9458).